Consider the following 569-residue polypeptide: Pyruvate decarboxylase (569 aa).

Positions 38 and 124 each coordinate pyruvate. Residues Thr-398 and 421–423 (GSI) each bind thiamine diphosphate. A Mg(2+)-binding site is contributed by Asp-451. Residues 452-453 (GS) and 478-483 (NQGYTI) contribute to the thiamine diphosphate site. Mg(2+)-binding residues include Asn-478 and Gly-480. Glu-484 contributes to the pyruvate binding site.

The protein belongs to the TPP enzyme family. Homotetramer. Mg(2+) serves as cofactor. Requires thiamine diphosphate as cofactor.

The enzyme catalyses a 2-oxocarboxylate + H(+) = an aldehyde + CO2. It catalyses the reaction pyruvate + H(+) = acetaldehyde + CO2. This Aspergillus terreus (strain NIH 2624 / FGSC A1156) protein is Pyruvate decarboxylase (pdcA).